A 594-amino-acid polypeptide reads, in one-letter code: Probable translation initiation factor IF-2 (594 aa).

One can recognise a tr-type G domain in the interval 11–226; the sequence is LRTPIVCVMG…LIGLAQRFLE (216 aa). A G1 region spans residues 20-27; the sequence is GHVDHGKT. Position 20–27 (20–27) interacts with GTP; the sequence is GHVDHGKT. The interval 45-49 is G2; that stretch reads AITQH. The tract at residues 81 to 84 is G3; the sequence is DTPG. GTP-binding positions include 81 to 85 and 135 to 138; these read DTPGH and NKID. A G4 region spans residues 135–138; the sequence is NKID. Residues 203–205 are G5; that stretch reads SAR.

This sequence belongs to the TRAFAC class translation factor GTPase superfamily. Classic translation factor GTPase family. IF-2 subfamily.

Function in general translation initiation by promoting the binding of the formylmethionine-tRNA to ribosomes. Seems to function along with eIF-2. In Methanocella arvoryzae (strain DSM 22066 / NBRC 105507 / MRE50), this protein is Probable translation initiation factor IF-2.